The chain runs to 308 residues: Probable 5-dehydro-4-deoxyglucarate dehydratase (308 aa).

This sequence belongs to the DapA family.

The enzyme catalyses 5-dehydro-4-deoxy-D-glucarate + H(+) = 2,5-dioxopentanoate + CO2 + H2O. The protein operates within carbohydrate acid metabolism; D-glucarate degradation; 2,5-dioxopentanoate from D-glucarate: step 2/2. The protein is Probable 5-dehydro-4-deoxyglucarate dehydratase of Oceanobacillus iheyensis (strain DSM 14371 / CIP 107618 / JCM 11309 / KCTC 3954 / HTE831).